Consider the following 352-residue polypeptide: Phosphoribosylformylglycinamidine cyclo-ligase (352 aa).

It belongs to the AIR synthase family.

It localises to the cytoplasm. It carries out the reaction 2-formamido-N(1)-(5-O-phospho-beta-D-ribosyl)acetamidine + ATP = 5-amino-1-(5-phospho-beta-D-ribosyl)imidazole + ADP + phosphate + H(+). It participates in purine metabolism; IMP biosynthesis via de novo pathway; 5-amino-1-(5-phospho-D-ribosyl)imidazole from N(2)-formyl-N(1)-(5-phospho-D-ribosyl)glycinamide: step 2/2. This Ectopseudomonas mendocina (strain ymp) (Pseudomonas mendocina) protein is Phosphoribosylformylglycinamidine cyclo-ligase.